We begin with the raw amino-acid sequence, 570 residues long: MSEKHPGPLVVEGKLTDAERMKLESNYLRGTIAEDLNDGLTGGFKGDNFLLIRFHGMYQQDDRDIRAERAEQKLEPRHAMLLRCRLPGGVITTKQWQAIDKFAGENTIYGSIRLTNRQTFQFHGILKKNVKPVHQMLHSVGLDALATANDMNRNVLCTSNPYESQLHAEAYEWAKKISEHLLPRTRAYAEIWLDQEKVATTDEEPILGQTYLPRKFKTTVVIPPQNDIDLHANDMNFVAIAENGKLVGFNLLVGGGLSIEHGNKKTYARTASEFGYLPLEHTLAVAEAVVTTQRDWGNRTDRKNAKTKYTLERVGVETFKAEVERRAGIKFEPIRPYEFTGRGDRIGWVKGIDDKWHLTLFIENGRILDYPGRPLKTGLLEIAKIHKGDFRITANQNLIIAGVPESEKAKIEKIAKESGLMNAVTPQRENSMACVSFPTCPLAMAEAERFLPSFIDNIDNLMAKHGVSDEHIVMRVTGCPNGCGRAMLAEVGLVGKAPGRYNLHLGGNRIGTRIPRMYKENITEPEILASLDELIGRWAKEREAGEGFGDFTVRAGIIRPVLDPARDLWD.

[4Fe-4S] cluster is bound by residues Cys434, Cys440, Cys479, and Cys483. Residue Cys483 participates in siroheme binding.

The protein belongs to the nitrite and sulfite reductase 4Fe-4S domain family. As to quaternary structure, alpha(8)-beta(8). The alpha component is a flavoprotein, the beta component is a hemoprotein. Siroheme is required as a cofactor. [4Fe-4S] cluster serves as cofactor.

It carries out the reaction hydrogen sulfide + 3 NADP(+) + 3 H2O = sulfite + 3 NADPH + 4 H(+). The protein operates within sulfur metabolism; hydrogen sulfide biosynthesis; hydrogen sulfide from sulfite (NADPH route): step 1/1. Functionally, component of the sulfite reductase complex that catalyzes the 6-electron reduction of sulfite to sulfide. This is one of several activities required for the biosynthesis of L-cysteine from sulfate. The protein is Sulfite reductase [NADPH] hemoprotein beta-component of Escherichia coli O9:H4 (strain HS).